The primary structure comprises 297 residues: Glycine--tRNA ligase alpha subunit (297 aa).

Belongs to the class-II aminoacyl-tRNA synthetase family. Tetramer of two alpha and two beta subunits.

The protein localises to the cytoplasm. It catalyses the reaction tRNA(Gly) + glycine + ATP = glycyl-tRNA(Gly) + AMP + diphosphate. The polypeptide is Glycine--tRNA ligase alpha subunit (Sulfurihydrogenibium sp. (strain YO3AOP1)).